The primary structure comprises 169 residues: uncharacterized protein (169 aa).

This is an uncharacterized protein from Autographa californica nuclear polyhedrosis virus (AcMNPV).